The primary structure comprises 348 residues: Dihydroorotate dehydrogenase (quinone) (348 aa).

FMN-binding positions include 60 to 64 (AGLDK) and Thr84. Lys64 contacts substrate. A substrate-binding site is contributed by 109 to 113 (NRMGF). Positions 137 and 170 each coordinate FMN. Asn170 contributes to the substrate binding site. Ser173 (nucleophile) is an active-site residue. Asn175 is a substrate binding site. FMN contacts are provided by Lys215 and Thr243. 244 to 245 (NT) provides a ligand contact to substrate. FMN contacts are provided by residues Gly266, Gly295, and 316-317 (YS).

It belongs to the dihydroorotate dehydrogenase family. Type 2 subfamily. As to quaternary structure, monomer. It depends on FMN as a cofactor.

Its subcellular location is the cell membrane. The catalysed reaction is (S)-dihydroorotate + a quinone = orotate + a quinol. Its pathway is pyrimidine metabolism; UMP biosynthesis via de novo pathway; orotate from (S)-dihydroorotate (quinone route): step 1/1. Catalyzes the conversion of dihydroorotate to orotate with quinone as electron acceptor. The polypeptide is Dihydroorotate dehydrogenase (quinone) (Nitrosospira multiformis (strain ATCC 25196 / NCIMB 11849 / C 71)).